Here is an 867-residue protein sequence, read N- to C-terminus: Pentatricopeptide repeat-containing protein At2g39230, mitochondrial (867 aa).

The transit peptide at 1–49 (MTTFMVSKRFRPPIFLHRFINPKPISSQTRFLHPPDNQSRDISDSTTET) directs the protein to the mitochondrion. Residues 27-74 (SQTRFLHPPDNQSRDISDSTTETISTLEFPHKTSVPNHSPLTSTSETE) form a disordered region. Over residues 60 to 72 (SVPNHSPLTSTSE) the composition is skewed to polar residues. 19 PPR repeats span residues 168–202 (TPRA…KVVP), 203–237 (FVPY…GVAG), 238–272 (DNVT…GAEP), 273–307 (DGLL…LGVP), 309–343 (SQET…GIPM), 344–378 (SVIA…GLAP), 379–413 (DKVM…RIAP), 414–444 (SSVL…SFES), 448–482 (HGFM…GIEP), 483–517 (NVVF…GLEP), 518–552 (NNFT…NFEA), 553–588 (NEVI…RYSM), 589–623 (SCTS…GKSP), 624–658 (NVVT…ELKL), 659–693 (DLPA…GLMP), 694–728 (NVSV…GISC), 729–763 (DLFT…GIVP), 764–798 (DEIL…DVTP), and 799–833 (NVLL…GIVH).

The protein belongs to the PPR family. P subfamily. Expressed in lateral organ junctions and shoot apical meristem (SAM).

It is found in the mitochondrion. Its function is as follows. Involved in lateral organ development and boundary demarcation. This chain is Pentatricopeptide repeat-containing protein At2g39230, mitochondrial (LOJ), found in Arabidopsis thaliana (Mouse-ear cress).